Reading from the N-terminus, the 192-residue chain is A-type ATP synthase subunit E (192 aa).

The protein belongs to the V-ATPase E subunit family. In terms of assembly, has multiple subunits with at least A(3), B(3), C, D, E, F, H, I and proteolipid K(x).

Its subcellular location is the cell membrane. Functionally, component of the A-type ATP synthase that produces ATP from ADP in the presence of a proton gradient across the membrane. The polypeptide is A-type ATP synthase subunit E (Methanoculleus marisnigri (strain ATCC 35101 / DSM 1498 / JR1)).